Here is a 4085-residue protein sequence, read N- to C-terminus: Replicase polyprotein 1a (4085 aa).

The CoV Nsp1 globular domain maps to 2-109; the sequence is ACNRVTLAVA…EFDVVFGKRG (108 aa). The 247-residue stretch at 113 to 359 folds into the CoV Nsp2 N-terminal domain; it reads VTYTDQYLCG…RNSVTDECRL (247 aa). The Zn(2+) site is built by Cys-246, Cys-248, Cys-265, and Cys-266. A C4 region spans residues 246-266; that stretch reads CTCGTKSWSVGDWTGFKSSCC. Residues 389 to 775 form the CoV Nsp2 middle domain; that stretch reads YDDIFAESKP…LEAYNAFLDT (387 aa). The 125-residue stretch at 773-897 folds into the CoV Nsp2 C-terminal domain; the sequence is LDTVVSTVKI…LPVAFTKAAG (125 aa). In terms of domain architecture, Ubiquitin-like 1 spans 898 to 993; it reads GKVSFSDDVE…VMISEWPLSV (96 aa). The Peptidase C16 1 domain occupies 1016 to 1268; sequence VNSIFDIETV…DTTPKEEFVV (253 aa). Catalysis depends on Cys-1054, which acts as the For PL1-PRO activity. Residues 1126–1157 form a C4-type 1; degenerate zinc finger; the sequence is CSCTSGRLEESGAVLFCTPTKKAFPYGTCLNC. Catalysis depends on for PL1-PRO activity residues His-1205 and Asp-1218. The Macro domain occupies 1269 to 1436; sequence KEKLNAFLVH…KVKDFVSGLV (168 aa). The Ubiquitin-like 2 domain maps to 1600–1655; the sequence is AKVITIKVTEDGVNVHDVTVTTDKSFEQQVGVIADKDKDLSGAVPSDLNTSELLTK. The Peptidase C16 2 domain maps to 1663 to 1914; it reads EFYGFKDAVT…TVKPKPVINQ (252 aa). Cys-1701 acts as the For PL2-PRO activity in catalysis. Zn(2+)-binding residues include Cys-1780, Cys-1783, Cys-1813, and His-1815. Residues 1780 to 1815 form a C4-type 2; atypical zinc finger; that stretch reads CVECDAKFKNSVASINSAIVCASVKRDGVQVGYCVH. Residues His-1863 and Asp-1868 each act as for PL2-PRO activity in the active site. The HD1 stretch occupies residues 1925-2115; sequence FGDFLIHNFV…STVGVFLGYK (191 aa). The helical transmembrane segment at 1998–2018 threads the bilayer; the sequence is LLLLIYTLYSVVLLCVRFGPF. Positions 2005–2070 constitute a 3Ecto domain; sequence LYSVVLLCVR…LDVVWKHITD (66 aa). 2 cysteine pairs are disulfide-bonded: Cys-2021/Cys-2048 and Cys-2039/Cys-2045. The next 2 membrane-spanning stretches (helical) occupy residues 2068–2088 and 2095–2115; these read ITDP…LLIF and CFLL…LGYK. Positions 2144–2234 are Y1; sequence SFVRHVLFGC…ITKTNVQPTG (91 aa). Residues 2144–2483 enclose the CoV Nsp3 Y domain; the sequence is SFVRHVLFGC…PATSIVAKQG (340 aa). Zn(2+)-binding residues include His-2148, Cys-2153, Cys-2158, Cys-2161, Cys-2194, His-2197, Cys-2201, and Cys-2204. Residues 2148–2161 form a ZF1 region; that stretch reads HVLFGCENPDCIAC. The segment at 2194–2204 is ZF2; it reads CKKHRFFCVDC. The Y2 stretch occupies residues 2235–2324; that stretch reads PAYVMIDKVE…LVDSELLSTL (90 aa). The interval 2235-2483 is coV-Y; sequence PAYVMIDKVE…PATSIVAKQG (249 aa). The Y3 stretch occupies residues 2325 to 2381; the sequence is SVDFNGVLHKAYIDVLRNSFGKDLNANMSLAECKRALGLSISDHEFTSAISNAHRCD. Residues 2382–2483 form a Y4 region; it reads VLLSDLSFNN…PATSIVAKQG (102 aa). 6 helical membrane passes run 2491-2511, 2731-2751, 2755-2775, 2782-2802, 2809-2829, and 2834-2854; these read LTWL…LCFF, LWNL…VAAM, ILLN…VTKF, LSVG…SYIV, MIAY…AWIW, and LIAY…LAML. An HD2 region spans residues 2491–2854; sequence LTWLWLLCGL…LCAWYFLAML (364 aa). The region spanning 2870–2965 is the Nsp4C domain; it reads LFEGDKFVGT…PTVSYGSTLQ (96 aa). Positions 2966 to 3267 constitute a Peptidase C30 domain; it reads AGLRKMAQPS…VKQMFGVNLQ (302 aa). Catalysis depends on for 3CL-PRO activity residues His-3006 and Cys-3109. 7 helical membrane passes run 3281-3301, 3304-3324, 3328-3348, 3367-3387, 3401-3421, 3422-3442, and 3467-3487; these read FAGF…TIWV, GFLT…TFVV, VLFL…QNCA, VMQM…VALL, CTYL…YDYV, SLLV…AIIF, and LLFY…LYWI. The segment at 3281–3487 is HD3; sequence FAGFFVMFWA…CMYYGLLYWI (207 aa). The RdRp Nsp7 cofactor domain maps to 3547–3629; it reads SKLTDLKCTN…SYFENDSILQ (83 aa). One can recognise a RdRp Nsp8 cofactor domain in the interval 3630–3824; that stretch reads SVASSFVGMP…LTCERVVKLQ (195 aa). In terms of domain architecture, Nsp9 ssRNA-binding spans 3825–3933; sequence NNEIMPGKMK…GYIGATVRLQ (109 aa). Positions 3934-4072 constitute an ExoN/MTase coactivator domain; the sequence is AGKQTEFVSN…DRTAIQSFDN (139 aa). 8 residues coordinate Zn(2+): Cys-4007, Cys-4010, His-4016, Cys-4023, Cys-4049, Cys-4052, Cys-4060, and Cys-4062. 2 zinc fingers span residues 4007 to 4023 and 4049 to 4062; these read CIYC…DGFC and CKVC…GCTC.

This sequence belongs to the coronaviruses polyprotein 1ab family. As to quaternary structure, 3CL-PRO exists as monomer and homodimer. Eight copies of nsp7 and eight copies of nsp8 assemble to form a heterohexadecamer. Nsp9 is a dimer. Nsp10 forms a dodecamer. Post-translationally, specific enzymatic cleavages in vivo by its own proteases yield mature proteins. 3CL-PRO and PL-PRO proteinases are autocatalytically processed.

It localises to the host membrane. Its subcellular location is the host cytoplasm. It is found in the host perinuclear region. The catalysed reaction is Thiol-dependent hydrolysis of ester, thioester, amide, peptide and isopeptide bonds formed by the C-terminal Gly of ubiquitin (a 76-residue protein attached to proteins as an intracellular targeting signal).. Functionally, the papain-like proteinase 1 (PLP1) and papain-like proteinase 2 (PLP2) are responsible for the cleavages located at the N-terminus of the replicase polyprotein. In addition, PLP2 possesses a deubiquitinating/deISGylating activity and processes both 'Lys-48'- and 'Lys-63'-linked polyubiquitin chains from cellular substrates. PLP2 also antagonizes innate immune induction of type I interferon by blocking the nuclear translocation of host IRF-3. Responsible for the majority of cleavages as it cleaves the C-terminus of replicase polyprotein at 11 sites. Recognizes substrates containing the core sequence [ILMVF]-Q-|-[SGACN]. Inhibited by the substrate-analog Cbz-Val-Asn-Ser-Thr-Leu-Gln-CMK. Also contains an ADP-ribose-1''-phosphate (ADRP)-binding function. In terms of biological role, nsp7-nsp8 hexadecamer may possibly confer processivity to the polymerase, maybe by binding to dsRNA or by producing primers utilized by the latter. Its function is as follows. Nsp9 is a ssRNA-binding protein. The protein is Replicase polyprotein 1a of Homo sapiens (Human).